The sequence spans 392 residues: DNA replication and repair protein RecF (392 aa).

ATP is bound at residue 30–37 (GRNGFGKT).

The protein belongs to the RecF family.

It is found in the cytoplasm. In terms of biological role, the RecF protein is involved in DNA metabolism; it is required for DNA replication and normal SOS inducibility. RecF binds preferentially to single-stranded, linear DNA. It also seems to bind ATP. In Corynebacterium aurimucosum (strain ATCC 700975 / DSM 44827 / CIP 107346 / CN-1) (Corynebacterium nigricans), this protein is DNA replication and repair protein RecF.